A 149-amino-acid polypeptide reads, in one-letter code: Large ribosomal subunit protein bL9 (149 aa).

It belongs to the bacterial ribosomal protein bL9 family.

Binds to the 23S rRNA. The protein is Large ribosomal subunit protein bL9 of Salmonella dublin (strain CT_02021853).